Consider the following 533-residue polypeptide: GMP synthase [glutamine-hydrolyzing] (533 aa).

The Glutamine amidotransferase type-1 domain maps to 25 to 215; that stretch reads SIVIFDFGSQ…VFNICKCHAN (191 aa). The active-site Nucleophile is cysteine 102. Active-site residues include histidine 189 and glutamate 191. The GMPS ATP-PPase domain occupies 216 to 408; it reads WTMGNYIQES…LGLPDEMIWR (193 aa). ATP is bound at residue 243 to 249; the sequence is SGGVDSA.

In terms of assembly, homodimer.

The catalysed reaction is XMP + L-glutamine + ATP + H2O = GMP + L-glutamate + AMP + diphosphate + 2 H(+). The protein operates within purine metabolism; GMP biosynthesis; GMP from XMP (L-Gln route): step 1/1. In terms of biological role, catalyzes the synthesis of GMP from XMP. This is GMP synthase [glutamine-hydrolyzing] from Dehalococcoides mccartyi (strain CBDB1).